Reading from the N-terminus, the 309-residue chain is Ubiquitin-conjugating enzyme E2 32 (309 aa).

A UBC core domain is found at 11–166 (PAVKRILQEV…ERQKIIDEIH (156 aa)). The Glycyl thioester intermediate role is filled by C93. The chain crosses the membrane as a helical span at residues 275-295 (FTWAAVGLTIAIMVLLLKKFI).

Belongs to the ubiquitin-conjugating enzyme family.

The protein localises to the membrane. It catalyses the reaction S-ubiquitinyl-[E1 ubiquitin-activating enzyme]-L-cysteine + [E2 ubiquitin-conjugating enzyme]-L-cysteine = [E1 ubiquitin-activating enzyme]-L-cysteine + S-ubiquitinyl-[E2 ubiquitin-conjugating enzyme]-L-cysteine.. The protein operates within protein modification; protein ubiquitination. Functionally, accepts the ubiquitin from the E1 complex and catalyzes its covalent attachment to other proteins. In Arabidopsis thaliana (Mouse-ear cress), this protein is Ubiquitin-conjugating enzyme E2 32 (UBC32).